Reading from the N-terminus, the 576-residue chain is 5'-nucleotidase (576 aa).

A signal peptide spans 1–28 (MRPAAAKVPKWLLLALSALLPQWPAASA). Zn(2+) contacts are provided by aspartate 38 and histidine 40. Cysteine 53 and cysteine 59 form a disulfide bridge. The N-linked (GlcNAc...) asparagine glycan is linked to asparagine 55. Zn(2+) contacts are provided by aspartate 87, asparagine 119, histidine 222, and histidine 245. N-linked (GlcNAc...) asparagine glycosylation is found at asparagine 313 and asparagine 335. Disulfide bonds link cysteine 355–cysteine 360 and cysteine 367–cysteine 389. Arginine 356 lines the AMP pocket. Arginine 356 is a binding site for IMP. Residues asparagine 392 and arginine 397 each contribute to the AMP site. The IMP site is built by asparagine 392 and arginine 397. N-linked (GlcNAc...) asparagine glycosylation occurs at asparagine 405. Phenylalanine 419 lines the AMP pocket. Phenylalanine 419 lines the IMP pocket. The cysteines at positions 478 and 481 are disulfide-linked. 2 residues coordinate AMP: tyrosine 502 and aspartate 508. 2 residues coordinate IMP: tyrosine 502 and aspartate 508. Serine 551 is lipidated: GPI-anchor amidated serine. The propeptide at 552–576 (AASHYQGSFPLVILSFWAMILILYQ) is removed in mature form.

It belongs to the 5'-nucleotidase family. In terms of assembly, homodimer. Requires Zn(2+) as cofactor. In terms of tissue distribution, expressed at high levels in the placenta, kidney, lung and stomach and at lower levels in the thymus, spleen, skeletal muscle and esophagus.

It is found in the cell membrane. The enzyme catalyses a ribonucleoside 5'-phosphate + H2O = a ribonucleoside + phosphate. It carries out the reaction a 2'-deoxyribonucleoside 5'-phosphate + H2O = a 2'-deoxyribonucleoside + phosphate. It catalyses the reaction dTMP + H2O = thymidine + phosphate. The catalysed reaction is CMP + H2O = cytidine + phosphate. The enzyme catalyses IMP + H2O = inosine + phosphate. It carries out the reaction AMP + H2O = adenosine + phosphate. It catalyses the reaction GMP + H2O = guanosine + phosphate. The catalysed reaction is UMP + H2O = uridine + phosphate. The enzyme catalyses dAMP + H2O = 2'-deoxyadenosine + phosphate. It carries out the reaction dCMP + H2O = 2'-deoxycytidine + phosphate. Functionally, catalyzes the hydrolysis of nucleotide monophosphates, releasing inorganic phosphate and the corresponding nucleoside. Hydrolyzes IMP. Shows a preference for ribonucleotide monophosphates over their equivalent deoxyribose forms. Although AMP is the preferred substrate can also hydrolyze UMP, GMP, CMP, dAMP, dCMP, dTMP, NAD and NMN. In Mus musculus (Mouse), this protein is 5'-nucleotidase (Nt5e).